Consider the following 338-residue polypeptide: MMAMNSKQPFGMHPVLQEPKFSSLHSGSEAMRRVCLPAPQLQGNIFGSFDESLLARAEALAAVDIVSHGKNHPFKPDATYHTMSSVPCTSTSSTVPISHPAALTSHPHHAVHQGLEGDLLEHISPTLSVSGLGAPEHSVMPAQIHPHHLGAMGHLHQAMGMSHPHTVAPHSAMPACLSDVESDPRELEAFAERFKQRRIKLGVTQADVGAALANLKIPGVGSLSQSTICRFESLTLSHNNMIALKPVLQAWLEEAEAAYREKNSKPELFNGSERKRKRTSIAAPEKRSLEAYFAIQPRPSSEKIAAIAEKLDLKKNVVRVWFCNQRQKQKRMKYSAVH.

Residues 56-65 carry the POU-IV box motif; that stretch reads RAEALAAVDI. Positions 179–256 constitute a POU-specific domain; sequence DVESDPRELE…VLQAWLEEAE (78 aa). The segment at residues 274 to 333 is a DNA-binding region (homeobox); it reads RKRKRTSIAAPEKRSLEAYFAIQPRPSSEKIAAIAEKLDLKKNVVRVWFCNQRQKQKRMK.

It belongs to the POU transcription factor family. Class-4 subfamily. As to quaternary structure, interacts with ISL1. Brain. Seems to be specific to the retina.

Its subcellular location is the nucleus. It is found in the cytoplasm. Its function is as follows. Acts as a transcriptional activator. Acts by binding to sequences related to the consensus octamer motif 5'-ATGCAAAT-3' in the regulatory regions of its target genes. Involved in the auditory system development, required for terminal differentiation of hair cells in the inner ear. This is POU domain, class 4, transcription factor 3 (POU4F3) from Homo sapiens (Human).